Consider the following 534-residue polypeptide: Peptide chain release factor 3 (534 aa).

A tr-type G domain is found at 9–278 (ARRRTFAIIS…FFVEHAPSPQ (270 aa)). Residues 18–25 (SHPDAGKT), 86–90 (DTPGH), and 140–143 (NKLD) each bind GTP.

The protein belongs to the TRAFAC class translation factor GTPase superfamily. Classic translation factor GTPase family. PrfC subfamily.

The protein resides in the cytoplasm. Functionally, increases the formation of ribosomal termination complexes and stimulates activities of RF-1 and RF-2. It binds guanine nucleotides and has strong preference for UGA stop codons. It may interact directly with the ribosome. The stimulation of RF-1 and RF-2 is significantly reduced by GTP and GDP, but not by GMP. In Xylella fastidiosa (strain M12), this protein is Peptide chain release factor 3.